The sequence spans 428 residues: C4-dicarboxylate transport protein (428 aa).

Helical transmembrane passes span 8–28, 44–64, 76–96, 142–162, 184–204, 222–242, 289–309, 326–346, and 352–372; these read SLYVQVLTAIAIGILLGHFYP, LIKMVIAPVIFCTVVTGIAGM, VALLYFEVVSTIALIIGLIIV, IGAFASGNILQVLLFAVLFGF, VIFGIINMIMRLAPIGAFGAM, LIICFYITCILFVVVVLGSIA, VVGLVIPTGYSFNLDGTSIYL, IFHQITLLVVLLLSSKGAAGV, and IVLAATISAVGHLPVAGLALI.

This sequence belongs to the dicarboxylate/amino acid:cation symporter (DAACS) (TC 2.A.23) family.

The protein resides in the cell inner membrane. Its function is as follows. Responsible for the transport of dicarboxylates such as succinate, fumarate, and malate from the periplasm across the membrane. This is C4-dicarboxylate transport protein from Klebsiella pneumoniae (strain 342).